A 120-amino-acid polypeptide reads, in one-letter code: Large ribosomal subunit protein uL18 (120 aa).

Belongs to the universal ribosomal protein uL18 family. In terms of assembly, part of the 50S ribosomal subunit; part of the 5S rRNA/L5/L18/L25 subcomplex. Contacts the 5S and 23S rRNAs.

In terms of biological role, this is one of the proteins that bind and probably mediate the attachment of the 5S RNA into the large ribosomal subunit, where it forms part of the central protuberance. The sequence is that of Large ribosomal subunit protein uL18 from Afipia carboxidovorans (strain ATCC 49405 / DSM 1227 / KCTC 32145 / OM5) (Oligotropha carboxidovorans).